The following is a 319-amino-acid chain: D-alanine--D-alanine ligase (319 aa).

The region spanning 120 to 315 (KRVLAQAGVP…YPELLRRLVE (196 aa)) is the ATP-grasp domain. 147–198 (DPPFFVKPANTGSSVGISRVERFQDLEAALALAFRYDEKAVVEKALSPVREL) is an ATP binding site. Mg(2+)-binding residues include D270, E282, and N284.

This sequence belongs to the D-alanine--D-alanine ligase family. Mg(2+) is required as a cofactor. Requires Mn(2+) as cofactor.

It localises to the cytoplasm. The catalysed reaction is 2 D-alanine + ATP = D-alanyl-D-alanine + ADP + phosphate + H(+). Its pathway is cell wall biogenesis; peptidoglycan biosynthesis. Its function is as follows. Cell wall formation. The sequence is that of D-alanine--D-alanine ligase from Thermus thermophilus (strain ATCC 27634 / DSM 579 / HB8).